The chain runs to 312 residues: Glyoxylate/hydroxypyruvate reductase A (312 aa).

Arginine 227 is an active-site residue. Histidine 275 serves as the catalytic Proton donor.

Belongs to the D-isomer specific 2-hydroxyacid dehydrogenase family. GhrA subfamily.

It is found in the cytoplasm. It catalyses the reaction glycolate + NADP(+) = glyoxylate + NADPH + H(+). The enzyme catalyses (R)-glycerate + NAD(+) = 3-hydroxypyruvate + NADH + H(+). The catalysed reaction is (R)-glycerate + NADP(+) = 3-hydroxypyruvate + NADPH + H(+). In terms of biological role, catalyzes the NADPH-dependent reduction of glyoxylate and hydroxypyruvate into glycolate and glycerate, respectively. The chain is Glyoxylate/hydroxypyruvate reductase A from Escherichia coli O81 (strain ED1a).